The primary structure comprises 522 residues: MEELQGYLEKDGSRQQPFLYPLLFQEYIYALAHDRGFKGSLFYEPAEVFGYDSKSSLALVKRLIIRIYQQNDFLSAVHDSNKNQFVSHHHKNLGYSHFYSQMISEGFAILVEIPFSLRLVSYFEKKEIPKSHNLRSIHSIFPFLEDKLLHLNYVSDILIPHPIHMEILVQILQCWIQDVPLLHFLLFFLHKYHNWNSFLITPKKSIYVFSKENKRLFRFLYNSYVSECEFLLVFLRKQSSYLRLTSFGPFLERRHFYVKMEHLQMQHLILIVVCRDYFQGTLWSYXXXXXXXXXXXXXVILASKGTHLLMKKWKYNFVNLWQYYFHFWYQSYRIHINQLSNHSFYFLGYLSSLPRNSSTVRNQMLENSFIIDTVTKKFETIVPVIFLIGSLSKAQFCTVSGHPISKPIWADLSDSEIIERFGRMCRNLSHYHSGSSKKQGLHRIKYILRLSCARTLARKHKSTVRTFLRRLGSGLLEEFFTEEEQVLSFILPKTIPFTFYGSHKERIWYLDIIRINDLVNHS.

This sequence belongs to the intron maturase 2 family. MatK subfamily.

It localises to the plastid. Its subcellular location is the chloroplast. Its function is as follows. Usually encoded in the trnK tRNA gene intron. Probably assists in splicing its own and other chloroplast group II introns. The polypeptide is Maturase K (Iris orientalis (Yellowband iris)).